The following is a 141-amino-acid chain: Hemoglobin subunit alpha (141 aa).

Positions 1–141 (VLSPADKTNI…VSTVLTSKYR (141 aa)) constitute a Globin domain. A Phosphoserine modification is found at S3. K7 is modified (N6-succinyllysine). Position 8 is a phosphothreonine (T8). At K11 the chain carries N6-succinyllysine. At K16 the chain carries N6-acetyllysine; alternate. K16 carries the post-translational modification N6-succinyllysine; alternate. The residue at position 24 (Y24) is a Phosphotyrosine. S35 bears the Phosphoserine mark. Residue K40 is modified to N6-succinyllysine. Position 49 is a phosphoserine (S49). H58 provides a ligand contact to O2. H87 contacts heme b. At S102 the chain carries Phosphoserine. Residue T108 is modified to Phosphothreonine. A Phosphoserine modification is found at S124. T134 and T137 each carry phosphothreonine. S138 bears the Phosphoserine mark.

It belongs to the globin family. As to quaternary structure, heterotetramer of two alpha chains and two beta chains. Red blood cells.

Its function is as follows. Involved in oxygen transport from the lung to the various peripheral tissues. Hemopressin acts as an antagonist peptide of the cannabinoid receptor CNR1. Hemopressin-binding efficiently blocks cannabinoid receptor CNR1 and subsequent signaling. The protein is Hemoglobin subunit alpha (HBA) of Vulpes vulpes (Red fox).